The chain runs to 189 residues: Auxin-responsive protein IAA3 (189 aa).

An EAR-like (transcriptional repression) motif is present at residues 12-16; sequence LRLGL. Residues 42-65 form a disordered region; that stretch reads TDTEKEIESSSRKTETSPPRKAQI. Positions 43-56 are enriched in basic and acidic residues; the sequence is DTEKEIESSSRKTE. The PB1 domain maps to 92–179; sequence GIYVKVSMDG…TCKRLRIMKG (88 aa).

The protein belongs to the Aux/IAA family. As to quaternary structure, homodimers and heterodimers. Interacts with TPL. Interacts with TIR1, the F-box component of the Skp1-Cdc53/cullin-F-box (SCFTIR1) E3 ubiquitin ligase complex. In terms of processing, phosphorylated by phytochrome A in vitro. As to expression, highly expressed in stems and flowers. Expressed in hypocotyls, cotyledons and leaves, but barely detected in roots. Expressed in root tips. In the root meristem, specifically detected at the vascular tissue transition zone.

The protein resides in the nucleus. Functionally, aux/IAA proteins are short-lived transcriptional factors that function as repressors of early auxin response genes at low auxin concentrations. Repression is thought to result from the interaction with auxin response factors (ARFs), proteins that bind to the auxin-responsive promoter element (AuxRE). Plays a central role in auxin regulation of root growth, in gravitropism, and in lateral root formation. Regulated by an auxin-induced protein turnover. Formation of heterodimers with ARF proteins may alter their ability to modulate early auxin response genes expression. When activated by cytokinin, restricts the expression of the PIN genes to the vascular transition zone. Induction of SHY2 in the vascular transition zone restricts BRX expression to down-regulate PIN3 and thus limit meristem growth, but proper SHY2 expression requires BRX. Involved in meristem growth and in determining its size. May participate in strigolactone signaling to regulate meristem size and lateral root formation. In Arabidopsis thaliana (Mouse-ear cress), this protein is Auxin-responsive protein IAA3 (IAA3).